The sequence spans 418 residues: Putative ion-transport protein YfeO (418 aa).

A run of 12 helical transmembrane segments spans residues 10 to 30 (LLLSLPAVAIGITSSLILIMV), 54 to 74 (DSPLWIIGVLTLTGIAVGLVI), 99 to 119 (ALPGLIVALILGLAGGVSLGP), 120 to 140 (EHPIITVNIALAVAIGARLLP), 149 to 169 (ILASAGTIGALFGTTVAAALI), 186 to 206 (LFAPLMAAAAGALTTGLFFHP), 223 to 243 (ILSGAIVAAIAIAAGMVAVWC), 258 to 278 (VFVLGIGGFILGILGVIGGPV), 300 to 320 (DYFLLAVIKLAALVVAAASGF), 322 to 342 (GGRIFPAVFVGVALGLMLHEH), 343 to 363 (VPAVPAAITVSCAILGIVLVV), and 371 to 391 (LFMAAVVVPNTTLLPLLCIVM).

This sequence belongs to the chloride channel (TC 2.A.49) family.

Its subcellular location is the cell membrane. The sequence is that of Putative ion-transport protein YfeO from Escherichia coli O127:H6 (strain E2348/69 / EPEC).